Consider the following 42-residue polypeptide: Lebocin-like anionic peptide 1 (42 aa).

As to expression, hemolymph.

The protein localises to the secreted. Its function is as follows. Antimicrobial protein. Has antibacterial activity against the Gram-positive bacteria M.luteus (MIC=22.7 uM) and L.monocytogenes (MIC=90.9 uM). Lacks antibacterial activity against the Gram-positive bacteria B.circulans, S.aureus, and S.lutea, and the Gram-negative bacteria E.coli D31, E.coli ATCC 25922, and S.typhimurium. Has antifungal activity against A.niger (MIC=90.9 uM) and T.harzianum (MIC=90.9 uM), but lacks antifungal activity against S.cerevisiae, P.pastoris, Z.marxianus, C.albicans, C.fructus, and F.oxysporum. This Galleria mellonella (Greater wax moth) protein is Lebocin-like anionic peptide 1.